Here is a 658-residue protein sequence, read N- to C-terminus: Translation factor GUF1, mitochondrial (658 aa).

A mitochondrion-targeting transit peptide spans 1–40 (MRGCLQTVRWLTSAWQRPPSYPPLSRAAPCRFFNVSIPRN). Residues 60-240 (DRFRNFCIVA…TVVEQIPAPV (181 aa)) form the tr-type G domain. GTP contacts are provided by residues 69 to 76 (AHVDHGKS), 133 to 137 (DTPGH), and 187 to 190 (NKVD).

Belongs to the TRAFAC class translation factor GTPase superfamily. Classic translation factor GTPase family. LepA subfamily.

The protein localises to the mitochondrion inner membrane. The enzyme catalyses GTP + H2O = GDP + phosphate + H(+). Promotes mitochondrial protein synthesis. May act as a fidelity factor of the translation reaction, by catalyzing a one-codon backward translocation of tRNAs on improperly translocated ribosomes. Binds to mitochondrial ribosomes in a GTP-dependent manner. The polypeptide is Translation factor GUF1, mitochondrial (Paracoccidioides brasiliensis (strain Pb03)).